A 623-amino-acid chain; its full sequence is Prothrombin (623 aa).

The N-terminal stretch at 1-24 is a signal peptide; the sequence is MAHVGGLWLHGCLALAVLVSLVHS. Residues 25–43 constitute a propeptide that is removed on maturation; sequence QHVFMAPQQALSLLQRARR. A Gla domain is found at 44–90; it reads ANSGFFEEMRKGNLERECVEEQCSREEAYEALESPSETDAFWAKYTA. E50, E51, E58, E60, E63, E64, E69, E70, E73, and E76 each carry 4-carboxyglutamate. A disulfide bridge links C61 with C66. Disulfide bonds link C91/C104, C109/C187, C130/C170, C158/C182, C214/C292, C235/C275, C263/C287, C337/C483, C392/C408, C537/C551, and C565/C595. 2 Kringle domains span residues 108-187 and 213-292; these read NCAE…IPVC and TCVP…LDYC. N120 and N144 each carry an N-linked (GlcNAc...) asparagine glycan. The region spanning 365-619 is the Peptidase S1 domain; it reads IVEGSDAEIG…LKKWMQKVID (255 aa). H407 acts as the Charge relay system in catalysis. N417 carries an N-linked (GlcNAc...) asparagine glycan. D463 (charge relay system) is an active-site residue. The interval 552–574 is high affinity receptor-binding region which is also known as the TP508 peptide; that stretch reads AGYKPDEGKRGDACEGDSGGPFV. The Charge relay system role is filled by S569.

The protein belongs to the peptidase S1 family. As to quaternary structure, heterodimer (named alpha-thrombin) of a light and a heavy chain; disulfide-linked. Forms a heterodimer with SERPINA5. In plasma, interacts (via N-terminus) with alpha-1-microglobulin; this interaction does not prevent the activation of prothrombin to thrombin. In terms of processing, the gamma-carboxyglutamyl residues, which bind calcium ions, result from the carboxylation of glutamyl residues by a microsomal enzyme, the vitamin K-dependent carboxylase. The modified residues are necessary for the calcium-dependent interaction with a negatively charged phospholipid surface, which is essential for the conversion of prothrombin to thrombin. In the penultimate step of the coagulation cascade, prothrombin is converted to thrombin by the prothrombinase complex composed of factor Xa (F10), cofactor Va (F5), and phospholipids. This activation requires factor Xa-catalyzed sequential cleavage at 2 sites, Arg-315 and Arg-364, along 2 possible pathways. In the first pathway, the first cleavage occurs at Arg-315, leading to the formation of the inactive intermediate prethrombin-2. This pathway preferentially occurs on platelets and in the absence of cofactor Va. In the second pathway, the first cleavage occurs at Arg-364, which separates protease domain into 2 chains that remain connected through a disulfide bond and generates the active intermediate meizothrombin. The presence of cofactor Va directs activation along the meizothrombin pathway and greatly accelerates the rate of cleavage at Arg-364, but has a smaller effect on the cleavage of meizothrombin at Arg-315. Meizothrombin accumulates as an intermediate when prothrombinase is assembled on the membrane of red blood cells.

It carries out the reaction Selective cleavage of Arg-|-Gly bonds in fibrinogen to form fibrin and release fibrinopeptides A and B.. Its activity is regulated as follows. Activity is promoted in the presence of negatively charged surfaces, such as polyphosphate and dextran sulfate. Inhibited by SERPINA5. Its function is as follows. Thrombin, which cleaves bonds after Arg and Lys, converts fibrinogen to fibrin and activates factors V, VII, VIII, XIII, and, in complex with thrombomodulin, protein C. Functions in blood homeostasis, inflammation and wound healing. Activates coagulation factor XI (F11); activation is promoted by the contact with negatively charged surfaces. Triggers the production of pro-inflammatory cytokines, such as MCP-1/CCL2 and IL8/CXCL8, in endothelial cells. In Sus scrofa (Pig), this protein is Prothrombin (F2).